The chain runs to 444 residues: Tubulin beta-8 chain (444 aa).

The MREI motif signature appears at 1 to 4 (MREI). GTP contacts are provided by glutamine 11, glutamate 69, serine 138, glycine 142, threonine 143, and glycine 144. A Mg(2+)-binding site is contributed by glutamate 69. At serine 172 the chain carries Phosphoserine; by CDK1. 2 residues coordinate GTP: asparagine 204 and asparagine 226. Residues 423–444 (QQYQDATAEEEEDEEYAEEEVA) form a disordered region. The span at 429–444 (TAEEEEDEEYAEEEVA) shows a compositional bias: acidic residues. Glutamate 436 is subject to 5-glutamyl polyglutamate.

Belongs to the tubulin family. Dimer of alpha and beta chains. A typical microtubule is a hollow water-filled tube with an outer diameter of 25 nm and an inner diameter of 15 nM. Alpha-beta heterodimers associate head-to-tail to form protofilaments running lengthwise along the microtubule wall with the beta-tubulin subunit facing the microtubule plus end conferring a structural polarity. Microtubules usually have 13 protofilaments but different protofilament numbers can be found in some organisms and specialized cells. Mg(2+) is required as a cofactor. In terms of processing, some glutamate residues at the C-terminus are polyglutamylated, resulting in polyglutamate chains on the gamma-carboxyl group. Polyglutamylation plays a key role in microtubule severing by spastin (SPAST). SPAST preferentially recognizes and acts on microtubules decorated with short polyglutamate tails: severing activity by SPAST increases as the number of glutamates per tubulin rises from one to eight, but decreases beyond this glutamylation threshold. Glutamylation is also involved in cilia motility. Some glutamate residues at the C-terminus are monoglycylated but not polyglycylated due to the absence of functional TTLL10 in human. Monoglycylation is mainly limited to tubulin incorporated into cilia and flagella axonemes, which is required for their stability and maintenance. Flagella glycylation controls sperm motility. Both polyglutamylation and monoglycylation can coexist on the same protein on adjacent residues, and lowering glycylation levels increases polyglutamylation, and reciprocally. Post-translationally, phosphorylated on Ser-172 by CDK1 during the cell cycle, from metaphase to telophase, but not in interphase. This phosphorylation inhibits tubulin incorporation into microtubules. Expressed at a high level in oocytes, at different stages of development.

It localises to the cytoplasm. Its subcellular location is the cytoskeleton. It is found in the spindle. Functionally, tubulin is the major constituent of microtubules, a cylinder consisting of laterally associated linear protofilaments composed of alpha- and beta-tubulin heterodimers. Microtubules grow by the addition of GTP-tubulin dimers to the microtubule end, where a stabilizing cap forms. Below the cap, tubulin dimers are in GDP-bound state, owing to GTPase activity of alpha-tubulin. TUBB8 has a key role in meiotic spindle assembly and oocyte maturation. The polypeptide is Tubulin beta-8 chain (Homo sapiens (Human)).